Here is a 497-residue protein sequence, read N- to C-terminus: Cytochrome P450 71A12 (497 aa).

A helical membrane pass occupies residues 4-24 (ILMVSLCLTTLITLFLLKQFL). A heme-binding site is contributed by Cys439.

It belongs to the cytochrome P450 family. The cofactor is heme.

The protein resides in the membrane. Functionally, converts indole-3-acetaldoxime to indole cyanohydrin. Involved in the biosynthetic pathway to 4-hydroxyindole-3-carbonyl nitrile (4-OH-ICN), a cyanogenic metabolite required for inducible pathogen defense. In Arabidopsis thaliana (Mouse-ear cress), this protein is Cytochrome P450 71A12 (CYP71A12).